Here is an 890-residue protein sequence, read N- to C-terminus: Translation initiation factor IF-2 (890 aa).

The segment at 45 to 304 (LIDHLNQKNS…LQQGFQKPAQ (260 aa)) is disordered. Positions 67–81 (STLNIPGTGGKSKSV) are enriched in polar residues. Basic and acidic residues predominate over residues 92–217 (VKRDPQEAER…RMAEENKWTD (126 aa)). Basic residues predominate over residues 252–266 (GRGRNAKAARPKKGN). Over residues 267–280 (KHAESKADREEARA) the composition is skewed to basic and acidic residues. Positions 389–558 (PRAPVVTIMG…LLQAEVLELK (170 aa)) constitute a tr-type G domain. The G1 stretch occupies residues 398–405 (GHVDHGKT). 398–405 (GHVDHGKT) is a GTP binding site. Residues 423–427 (GITQH) form a G2 region. The segment at 444 to 447 (DTPG) is G3. GTP is bound by residues 444–448 (DTPGH) and 498–501 (NKID). The tract at residues 498–501 (NKID) is G4. The G5 stretch occupies residues 534–536 (SAK). Lys-808 carries the N6-acetyllysine modification.

Belongs to the TRAFAC class translation factor GTPase superfamily. Classic translation factor GTPase family. IF-2 subfamily.

The protein localises to the cytoplasm. Functionally, one of the essential components for the initiation of protein synthesis. Protects formylmethionyl-tRNA from spontaneous hydrolysis and promotes its binding to the 30S ribosomal subunits. Also involved in the hydrolysis of GTP during the formation of the 70S ribosomal complex. This Escherichia coli (strain SMS-3-5 / SECEC) protein is Translation initiation factor IF-2.